A 450-amino-acid chain; its full sequence is Tubulin alpha-3C chain (450 aa).

An MREC motif motif is present at residues 1 to 4 (MREC). Q11 is a binding site for GTP. Position 40 is an N6-acetyllysine (K40). GTP contacts are provided by E71, S140, G144, T145, T179, N206, and N228. E71 is a Mg(2+) binding site. E254 is an active-site residue. The residue at position 282 (Y282) is a 3'-nitrotyrosine. Phosphoserine is present on S439. Y450 is subject to 3'-nitrotyrosine.

This sequence belongs to the tubulin family. In terms of assembly, dimer of alpha and beta chains. A typical microtubule is a hollow water-filled tube with an outer diameter of 25 nm and an inner diameter of 15 nM. Alpha-beta heterodimers associate head-to-tail to form protofilaments running lengthwise along the microtubule wall with the beta-tubulin subunit facing the microtubule plus end conferring a structural polarity. Microtubules usually have 13 protofilaments but different protofilament numbers can be found in some organisms and specialized cells. Requires Mg(2+) as cofactor. Some glutamate residues at the C-terminus are polyglutamylated, resulting in polyglutamate chains on the gamma-carboxyl group. Polyglutamylation plays a key role in microtubule severing by spastin (SPAST). SPAST preferentially recognizes and acts on microtubules decorated with short polyglutamate tails: severing activity by SPAST increases as the number of glutamates per tubulin rises from one to eight, but decreases beyond this glutamylation threshold. Glutamylation is also involved in cilia motility. Post-translationally, some glutamate residues at the C-terminus are monoglycylated but not polyglycylated due to the absence of functional TTLL10 in human. Monoglycylation is mainly limited to tubulin incorporated into cilia and flagella axonemes, which is required for their stability and maintenance. Flagella glycylation controls sperm motility. Both polyglutamylation and monoglycylation can coexist on the same protein on adjacent residues, and lowering glycylation levels increases polyglutamylation, and reciprocally. In terms of processing, acetylation of alpha chains at Lys-40 is located inside the microtubule lumen. This modification has been correlated with increased microtubule stability, intracellular transport and ciliary assembly. Methylation of alpha chains at Lys-40 is found in mitotic microtubules and is required for normal mitosis and cytokinesis contributing to genomic stability. Post-translationally, nitration of Tyr-450 is irreversible and interferes with normal dynein intracellular distribution. In terms of processing, undergoes a tyrosination/detyrosination cycle, the cyclic removal and re-addition of a C-terminal tyrosine residue by the enzymes tubulin tyrosine carboxypeptidase (MATCAP1/KIAA0895L, VASH1 or VASH2) and tubulin tyrosine ligase (TTL), respectively. Tyrosination promotes microtubule interaction with CAP-Gly domain-containing proteins such as CLIP1, CLIP2 and DCTN1. Tyrosination regulates the initiation of dynein-dynactin motility via interaction with DCTN1, which brings the dynein-dynactin complex into contact with microtubules. In neurons, tyrosinated tubulins mediate the initiation of retrograde vesicle transport. Post-translationally, detyrosination is involved in metaphase plate congression by guiding chromosomes during mitosis: detyrosination promotes interaction with CENPE, promoting pole-proximal transport of chromosomes toward the equator. Detyrosination increases microtubules-dependent mechanotransduction in dystrophic cardiac and skeletal muscle. In cardiomyocytes, detyrosinated microtubules are required to resist to contractile compression during contraction: detyrosination promotes association with desmin (DES) at force-generating sarcomeres, leading to buckled microtubules and mechanical resistance to contraction. Expressed in testis.

The protein resides in the cytoplasm. Its subcellular location is the cytoskeleton. It catalyses the reaction GTP + H2O = GDP + phosphate + H(+). Tubulin is the major constituent of microtubules, a cylinder consisting of laterally associated linear protofilaments composed of alpha- and beta-tubulin heterodimers. Microtubules grow by the addition of GTP-tubulin dimers to the microtubule end, where a stabilizing cap forms. Below the cap, tubulin dimers are in GDP-bound state, owing to GTPase activity of alpha-tubulin. This is Tubulin alpha-3C chain (TUBA3C) from Homo sapiens (Human).